We begin with the raw amino-acid sequence, 384 residues long: Actin-binding Rho-activating protein (384 aa).

Positions 1–11 (MARGEKGRGEG) are enriched in basic and acidic residues. Disordered stretches follow at residues 1–20 (MARG…LRKV), 32–159 (GWQQ…SPTR), and 181–211 (EQEE…EQDG). A compositionally biased stretch (polar residues) spans 35–47 (QWANENSTRQAQE). Acidic residues predominate over residues 134-145 (DGDEPEPEQPES). Phosphoserine is present on residues Ser-156 and Ser-191. 2 actin-binding regions span residues 202–302 (ETEE…AERA) and 303–384 (KRAE…TLLK). Interaction with actin stretches follow at residues 243–288 (SQVG…GDEG) and 355–384 (MRAR…TLLK).

As to quaternary structure, binds F-actin and ABLIM1, ABLIM2 and ABLIM3. Interaction with ABLIM2 and ABLIM3 enhances activity. Specifically expressed in heart and skeletal muscles.

The protein resides in the cytoplasm. The protein localises to the myofibril. It is found in the sarcomere. It localises to the cytoskeleton. Its function is as follows. Acts as an activator of serum response factor (SRF)-dependent transcription possibly by inducing nuclear translocation of MKL1 or MKL2 and through a mechanism requiring Rho-actin signaling. The polypeptide is Actin-binding Rho-activating protein (ABRA) (Sus scrofa (Pig)).